Consider the following 122-residue polypeptide: Fluoride-specific ion channel FluC (122 aa).

The next 4 membrane-spanning stretches (helical) occupy residues 6–26 (LVVG…INLV), 33–53 (SISL…GLLF), 60–80 (GLSP…FTTF), and 101–121 (LNII…FIIF). The Na(+) site is built by Gly75 and Thr78.

It belongs to the fluoride channel Fluc/FEX (TC 1.A.43) family.

Its subcellular location is the cell inner membrane. The catalysed reaction is fluoride(in) = fluoride(out). With respect to regulation, na(+) is not transported, but it plays an essential structural role and its presence is essential for fluoride channel function. Its function is as follows. Fluoride-specific ion channel. Important for reducing fluoride concentration in the cell, thus reducing its toxicity. This is Fluoride-specific ion channel FluC from Campylobacter jejuni subsp. jejuni serotype O:6 (strain 81116 / NCTC 11828).